We begin with the raw amino-acid sequence, 324 residues long: Phospho-N-acetylmuramoyl-pentapeptide-transferase (324 aa).

9 helical membrane passes run 5–25, 51–71, 77–97, 117–137, 147–167, 176–196, 203–223, 227–248, and 302–322; these read VILFTIIMGFLISVLLSPIFI, TPTMGGIMIIFSITITTIVMI, ISPEMFLLLFVTLGYGLLGFL, LIGQIVIAVIFYAVFHYYQFA, VSFDLGWAYFILVVFMLVGGS, LDGLLSGTAAIAFGAFAILAW, VAIFSVAVAGAVLGFLVFNAH, VFMGDTGSLALGGAIVAIAILT, and VVVTFWTAGLLLAVLGIYIEV.

It belongs to the glycosyltransferase 4 family. MraY subfamily. The cofactor is Mg(2+).

It localises to the cell membrane. It catalyses the reaction UDP-N-acetyl-alpha-D-muramoyl-L-alanyl-gamma-D-glutamyl-meso-2,6-diaminopimeloyl-D-alanyl-D-alanine + di-trans,octa-cis-undecaprenyl phosphate = di-trans,octa-cis-undecaprenyl diphospho-N-acetyl-alpha-D-muramoyl-L-alanyl-D-glutamyl-meso-2,6-diaminopimeloyl-D-alanyl-D-alanine + UMP. The protein operates within cell wall biogenesis; peptidoglycan biosynthesis. Its function is as follows. Catalyzes the initial step of the lipid cycle reactions in the biosynthesis of the cell wall peptidoglycan: transfers peptidoglycan precursor phospho-MurNAc-pentapeptide from UDP-MurNAc-pentapeptide onto the lipid carrier undecaprenyl phosphate, yielding undecaprenyl-pyrophosphoryl-MurNAc-pentapeptide, known as lipid I. This Bacillus pumilus (strain SAFR-032) protein is Phospho-N-acetylmuramoyl-pentapeptide-transferase.